We begin with the raw amino-acid sequence, 142 residues long: Hemoglobin subunit alpha (142 aa).

Residues 2–142 (VLSPADKTNV…VSTVLTSKYR (141 aa)) enclose the Globin domain. Ser-4 bears the Phosphoserine mark. Position 8 is an N6-succinyllysine (Lys-8). Position 9 is a phosphothreonine (Thr-9). Lys-12 is subject to N6-succinyllysine. Lys-17 bears the N6-acetyllysine; alternate mark. The residue at position 17 (Lys-17) is an N6-succinyllysine; alternate. Tyr-25 carries the phosphotyrosine modification. Ser-36 carries the phosphoserine modification. Lys-41 bears the N6-succinyllysine mark. Ser-50 carries the phosphoserine modification. Residue His-59 coordinates O2. His-88 contacts heme b. Residue Ser-103 is modified to Phosphoserine. At Thr-109 the chain carries Phosphothreonine. Phosphoserine is present on Ser-125. Phosphothreonine occurs at positions 135 and 138. Ser-139 carries the post-translational modification Phosphoserine.

The protein belongs to the globin family. Heterotetramer of two alpha chains and two beta chains. As to expression, red blood cells.

Functionally, involved in oxygen transport from the lung to the various peripheral tissues. Its function is as follows. Hemopressin acts as an antagonist peptide of the cannabinoid receptor CNR1. Hemopressin-binding efficiently blocks cannabinoid receptor CNR1 and subsequent signaling. In Ailuropoda melanoleuca (Giant panda), this protein is Hemoglobin subunit alpha (HBA).